A 205-amino-acid polypeptide reads, in one-letter code: Small ribosomal subunit protein uS4 (205 aa).

In terms of domain architecture, S4 RNA-binding spans 95–163 (RRLDNVVYRL…FKENLESRDP (69 aa)).

The protein belongs to the universal ribosomal protein uS4 family. As to quaternary structure, part of the 30S ribosomal subunit. Contacts protein S5. The interaction surface between S4 and S5 is involved in control of translational fidelity.

In terms of biological role, one of the primary rRNA binding proteins, it binds directly to 16S rRNA where it nucleates assembly of the body of the 30S subunit. With S5 and S12 plays an important role in translational accuracy. In Persephonella marina (strain DSM 14350 / EX-H1), this protein is Small ribosomal subunit protein uS4.